The following is a 1357-amino-acid chain: Regulator of V-ATPase in vacuolar membrane protein 1 (1357 aa).

8 WD repeats span residues 98–134 (HDDTPVNCLRWSSDNELAIGSDFLSFWKIKDNFGVYQ), 142–182 (KQPK…GEQA), 190–239 (PHPK…KNHT), 384–423 (GHNKSVQKLVRSSDGEALLTTSRFSENGVWYPQKLNHGVS), 431–470 (QTESPIKFAVVHELGKQVICLLENGALQAWECPTNRKEDS), 595–636 (INTG…LEYE), 638–679 (TFHN…YTNN), and 898–939 (QKSI…RIAY). A disordered region spans residues 1243–1357 (GSPSASDIES…ITKNLLDDFV (115 aa)). Residues serine 1244 and serine 1248 each carry the phosphoserine modification. Positions 1272–1288 (STSSNSLAQSSSSAPRS) are enriched in low complexity. The segment covering 1320-1332 (SENRKDKLSKDIL) has biased composition (basic and acidic residues).

As to quaternary structure, component of the RAVE complex composed of RAV1, RAV2 and CBF3D/SKP1. Within the complex, it interacts directly with RAV2 and CBF3D. Interacts with the V-ATPase V1 subunits VMA1, VMA2 and VMA8.

Its subcellular location is the endomembrane system. Its function is as follows. Component of the RAVE complex, which is required for stable assembly of the vacuolar ATPase complex V-ATPase under many conditions. Required for transport between the early endosome and the late endosome/prevacuolar compartment (PVC), suggesting that assembly of vacuolar ATPase at the early endosome is required for transport from the early endosome to the PVC. The polypeptide is Regulator of V-ATPase in vacuolar membrane protein 1 (RAV1) (Saccharomyces cerevisiae (strain ATCC 204508 / S288c) (Baker's yeast)).